A 338-amino-acid chain; its full sequence is Probable tRNA pseudouridine synthase B (338 aa).

The Nucleophile role is filled by Asp80. A PUA domain is found at 247–322; it reads LPRIEIRDTA…IMVDTKRVLM (76 aa).

It belongs to the pseudouridine synthase TruB family. Type 2 subfamily.

The catalysed reaction is uridine(55) in tRNA = pseudouridine(55) in tRNA. Its function is as follows. Could be responsible for synthesis of pseudouridine from uracil-55 in the psi GC loop of transfer RNAs. This Methanopyrus kandleri (strain AV19 / DSM 6324 / JCM 9639 / NBRC 100938) protein is Probable tRNA pseudouridine synthase B.